The primary structure comprises 338 residues: S-adenosylmethionine:tRNA ribosyltransferase-isomerase (338 aa).

Belongs to the QueA family. Monomer.

It is found in the cytoplasm. The enzyme catalyses 7-aminomethyl-7-carbaguanosine(34) in tRNA + S-adenosyl-L-methionine = epoxyqueuosine(34) in tRNA + adenine + L-methionine + 2 H(+). The protein operates within tRNA modification; tRNA-queuosine biosynthesis. Functionally, transfers and isomerizes the ribose moiety from AdoMet to the 7-aminomethyl group of 7-deazaguanine (preQ1-tRNA) to give epoxyqueuosine (oQ-tRNA). This chain is S-adenosylmethionine:tRNA ribosyltransferase-isomerase, found in Carboxydothermus hydrogenoformans (strain ATCC BAA-161 / DSM 6008 / Z-2901).